We begin with the raw amino-acid sequence, 607 residues long: Elongation factor 4 (607 aa).

The tr-type G domain maps to 11–193 (EKIRNFSIIA…QIVEKVPAPT (183 aa)). GTP is bound by residues 23–28 (DHGKST) and 140–143 (NKID).

The protein belongs to the TRAFAC class translation factor GTPase superfamily. Classic translation factor GTPase family. LepA subfamily.

The protein localises to the cell membrane. The enzyme catalyses GTP + H2O = GDP + phosphate + H(+). Its function is as follows. Required for accurate and efficient protein synthesis under certain stress conditions. May act as a fidelity factor of the translation reaction, by catalyzing a one-codon backward translocation of tRNAs on improperly translocated ribosomes. Back-translocation proceeds from a post-translocation (POST) complex to a pre-translocation (PRE) complex, thus giving elongation factor G a second chance to translocate the tRNAs correctly. Binds to ribosomes in a GTP-dependent manner. This Streptococcus pneumoniae (strain Hungary19A-6) protein is Elongation factor 4.